The chain runs to 270 residues: Checkpoint signal transducer rad25 (270 aa).

Phosphoserine occurs at positions 234 and 253. Residues 240–270 form a disordered region; it reads QSAKEEAPAAAAASENEHPEPKESTTDTVKA. Over residues 254–270 the composition is skewed to basic and acidic residues; sequence ENEHPEPKESTTDTVKA.

It belongs to the 14-3-3 family. As to quaternary structure, interacts with rad24. Interacts with byr2.

The protein resides in the cytoplasm. Acts in cell cycle and stress checkpoint signaling by sequestering signal transducers regulated by the checkpoints. Required for the DNA damage checkpoint that ensures that DNA damage is repaired before mitosis is attempted. Sequesters byr2 in the cytoplasm to prevent its translocation to the plasma membrane. In Schizosaccharomyces pombe (strain 972 / ATCC 24843) (Fission yeast), this protein is Checkpoint signal transducer rad25.